Reading from the N-terminus, the 478-residue chain is tRNA (guanine-N(7)-)-methyltransferase non-catalytic subunit TRM82 (478 aa).

4 WD repeats span residues serine 14 to proline 53, glutamate 73 to glutamine 113, glycine 217 to glutamate 258, and glycine 263 to lysine 301.

Belongs to the WD repeat TRM82 family. As to quaternary structure, forms a heterodimer with the catalytic subunit TRM8.

The protein localises to the nucleus. The protein operates within tRNA modification; N(7)-methylguanine-tRNA biosynthesis. In terms of biological role, required for the formation of N(7)-methylguanine at position 46 (m7G46) in tRNA. In the complex, it is required to stabilize and induce conformational changes of the catalytic subunit. In Phaeosphaeria nodorum (strain SN15 / ATCC MYA-4574 / FGSC 10173) (Glume blotch fungus), this protein is tRNA (guanine-N(7)-)-methyltransferase non-catalytic subunit TRM82.